A 294-amino-acid chain; its full sequence is Cytidine deaminase (294 aa).

CMP/dCMP-type deaminase domains follow at residues 48-168 (DEDA…FGPK) and 186-294 (LTGD…VLLG). 89–91 (NME) contributes to the substrate binding site. His102 serves as a coordination point for Zn(2+). The Proton donor role is filled by Glu104. Zn(2+) is bound by residues Cys129 and Cys132.

The protein belongs to the cytidine and deoxycytidylate deaminase family. In terms of assembly, homodimer. Zn(2+) is required as a cofactor.

The catalysed reaction is cytidine + H2O + H(+) = uridine + NH4(+). The enzyme catalyses 2'-deoxycytidine + H2O + H(+) = 2'-deoxyuridine + NH4(+). In terms of biological role, this enzyme scavenges exogenous and endogenous cytidine and 2'-deoxycytidine for UMP synthesis. This Salmonella choleraesuis (strain SC-B67) protein is Cytidine deaminase.